A 228-amino-acid chain; its full sequence is Core-capsid bridging protein (228 aa).

Residues 146–177 (ARPPAARISPPRRRRRRRRSPRPRATAAYRSS) are disordered. A compositionally biased stretch (basic residues) spans 155-167 (PPRRRRRRRRSPR). Over residues 168-177 (PRATAAYRSS) the composition is skewed to low complexity.

Belongs to the adenoviridae core-capsid bridging protein family. In terms of assembly, monomer. Homodimer. Exists in equilibrium between monomers and dimers in solution. Interacts with the histone-like nucleoprotein; this interactions bridge the virus core to the capsid. Interacts with core protein X; this interactions bridge the virus core to the capsid. Interacts with the endosome lysis protein VI; this interactions bridge the virus core to the capsid. Interacts with the peripentonal hexons. Interacts with host NPM1; this interaction might play a role in virus assembly.

Its subcellular location is the virion. It is found in the host nucleus. The protein resides in the host nucleolus. Its function is as follows. Associates loosely with the viral DNA to form an outer shell around the nucleoprotein-DNA complex and links it with the capsid by binding the endosome lysis protein. Dissociates from the viral genome during entry. Might be involved in nuclear capsid assembly of the viral particles through its association with NPM1/nucleophosmin. In Murine adenovirus A serotype 1 (MAdV-1), this protein is Core-capsid bridging protein.